The sequence spans 206 residues: HTH-type transcriptional regulator BetI (206 aa).

Residues 8 to 68 (PLRRKALVDA…ETIRSLLRDL (61 aa)) enclose the HTH tetR-type domain. Residues 31-50 (TMSDIAREAGVSAALAHHYF) constitute a DNA-binding region (H-T-H motif).

The protein operates within amine and polyamine biosynthesis; betaine biosynthesis via choline pathway [regulation]. Its function is as follows. Repressor involved in the biosynthesis of the osmoprotectant glycine betaine. It represses transcription of the choline transporter BetT and the genes of BetAB involved in the synthesis of glycine betaine. This Agrobacterium fabrum (strain C58 / ATCC 33970) (Agrobacterium tumefaciens (strain C58)) protein is HTH-type transcriptional regulator BetI.